A 410-amino-acid chain; its full sequence is Peptidase T (410 aa).

Residue H79 coordinates Zn(2+). D81 is an active-site residue. D142 is a Zn(2+) binding site. The active-site Proton acceptor is the E176. Zn(2+) contacts are provided by E177, D199, and H381.

Belongs to the peptidase M20B family. Zn(2+) is required as a cofactor.

The protein localises to the cytoplasm. It catalyses the reaction Release of the N-terminal residue from a tripeptide.. Its function is as follows. Cleaves the N-terminal amino acid of tripeptides. The polypeptide is Peptidase T (Bacillus velezensis (strain DSM 23117 / BGSC 10A6 / LMG 26770 / FZB42) (Bacillus amyloliquefaciens subsp. plantarum)).